The primary structure comprises 208 residues: Outer-membrane lipoprotein carrier protein (208 aa).

The N-terminal stretch at 1-22 (MKNLLCAVMLTSPLLYSTAVFA) is a signal peptide.

The protein belongs to the LolA family. In terms of assembly, monomer.

The protein resides in the periplasm. Participates in the translocation of lipoproteins from the inner membrane to the outer membrane. Only forms a complex with a lipoprotein if the residue after the N-terminal Cys is not an aspartate (The Asp acts as a targeting signal to indicate that the lipoprotein should stay in the inner membrane). The sequence is that of Outer-membrane lipoprotein carrier protein from Shewanella putrefaciens (strain CN-32 / ATCC BAA-453).